The following is a 459-amino-acid chain: UDP-N-acetylmuramoylalanine--D-glutamate ligase (459 aa).

Position 120–126 (120–126) interacts with ATP; the sequence is GSNGKTT.

Belongs to the MurCDEF family.

The protein localises to the cytoplasm. It carries out the reaction UDP-N-acetyl-alpha-D-muramoyl-L-alanine + D-glutamate + ATP = UDP-N-acetyl-alpha-D-muramoyl-L-alanyl-D-glutamate + ADP + phosphate + H(+). It functions in the pathway cell wall biogenesis; peptidoglycan biosynthesis. Cell wall formation. Catalyzes the addition of glutamate to the nucleotide precursor UDP-N-acetylmuramoyl-L-alanine (UMA). The protein is UDP-N-acetylmuramoylalanine--D-glutamate ligase of Lactobacillus helveticus (strain DPC 4571).